Here is a 107-residue protein sequence, read N- to C-terminus: Integration host factor subunit beta (107 aa).

Over residues 82 to 101 (PGKELRERVDRRAGEPLKAE) the composition is skewed to basic and acidic residues. The disordered stretch occupies residues 82–107 (PGKELRERVDRRAGEPLKAEDPDDDL).

This sequence belongs to the bacterial histone-like protein family. As to quaternary structure, heterodimer of an alpha and a beta chain.

Its function is as follows. This protein is one of the two subunits of integration host factor, a specific DNA-binding protein that functions in genetic recombination as well as in transcriptional and translational control. This is Integration host factor subunit beta from Paraburkholderia xenovorans (strain LB400).